The following is a 331-amino-acid chain: Betaine-homocysteine S-methyltransferase (331 aa).

The 322-residue stretch at 3 to 324 (VNQKWNWDTK…TDVLAIRKYV (322 aa)) folds into the Hcy-binding domain. C243, C309, and C310 together coordinate Zn(2+).

It belongs to the Betaine-homocysteine S-methyltransferase, BHMT family. Requires Zn(2+) as cofactor.

The catalysed reaction is L-homocysteine + glycine betaine = N,N-dimethylglycine + L-methionine. The protein operates within amino-acid biosynthesis; L-methionine biosynthesis via de novo pathway. Functionally, involved in the regulation of homocysteine metabolism. Converts betaine and homocysteine to dimethylglycine and methionine, respectively. The protein is Betaine-homocysteine S-methyltransferase of Drosophila melanogaster (Fruit fly).